Consider the following 119-residue polypeptide: Putative F-box protein At2g39415 (119 aa).

Positions 37-92 (IDSISSLPDVILQQILSSLPTNLAIRTSVLSTRWRHVWSDTPYIYFDGPGTLYRGL) constitute an F-box domain.

This chain is Putative F-box protein At2g39415, found in Arabidopsis thaliana (Mouse-ear cress).